The sequence spans 148 residues: SsrA-binding protein (148 aa).

The segment at 124–148 (QFDKRETEKDRDWQREKARLMREKA) is disordered.

It belongs to the SmpB family.

It is found in the cytoplasm. Required for rescue of stalled ribosomes mediated by trans-translation. Binds to transfer-messenger RNA (tmRNA), required for stable association of tmRNA with ribosomes. tmRNA and SmpB together mimic tRNA shape, replacing the anticodon stem-loop with SmpB. tmRNA is encoded by the ssrA gene; the 2 termini fold to resemble tRNA(Ala) and it encodes a 'tag peptide', a short internal open reading frame. During trans-translation Ala-aminoacylated tmRNA acts like a tRNA, entering the A-site of stalled ribosomes, displacing the stalled mRNA. The ribosome then switches to translate the ORF on the tmRNA; the nascent peptide is terminated with the 'tag peptide' encoded by the tmRNA and targeted for degradation. The ribosome is freed to recommence translation, which seems to be the essential function of trans-translation. The protein is SsrA-binding protein of Ralstonia pickettii (strain 12J).